A 245-amino-acid chain; its full sequence is Complement C1q subcomponent subunit C (245 aa).

The signal sequence occupies residues 1–28; it reads MDVGPSSLPHLGLKLLLLLLLLPLRGQA. A Collagen-like domain is found at 31-112; it reads GCYGIPGMPG…GIPGEPGEEG (82 aa). 6 positions are modified to 4-hydroxyproline: Pro-36, Pro-39, Pro-42, Pro-45, Pro-54, and Pro-63. The tract at residues 45–113 is disordered; that stretch reads PGKDGYDGLP…IPGEPGEEGR (69 aa). Residues 54–71 are compositionally biased toward low complexity; sequence PGPKGEPGIPAIPGIRGP. Position 75 is a 5-hydroxylysine (Lys-75). Lys-75 carries O-linked (Gal...) hydroxylysine glycosylation. 4-hydroxyproline occurs at positions 81, 93, 96, 99, and 105. Residues 90–99 are compositionally biased toward pro residues; the sequence is MGPPGMPGVP. Residues 115 to 245 enclose the C1q domain; it reads KQKFQSVFTV…VFSGFLLFPD (131 aa). Cys-179 and Cys-193 are disulfide-bonded.

In terms of assembly, core component of the complement C1 complex, a calcium-dependent complex composed of 1 molecule of the C1Q subcomplex, 2 molecules of C1R and 2 molecules of C1S. The C1Q subcomplex is composed 18 subunits: 3 chains of C1QA, C1QB, and C1QC trimerize to form 6 collagen-like triple helices connected to six globular ligand-recognition modules (C1q domain). In terms of processing, O-linked glycans consist of Glc-Gal disaccharides bound to the oxygen atom of post-translationally added hydroxyl groups.

It is found in the secreted. It localises to the cell surface. With respect to regulation, the C1Q subcomplex is inhibited by sulfated molecules, such as triterpenoid sulfates, heparan sulfate, or chondroitin sulfates. Its function is as follows. Core component of the complement C1 complex, a multiprotein complex that initiates the classical pathway of the complement system, a cascade of proteins that leads to phagocytosis and breakdown of pathogens and signaling that strengthens the adaptive immune system. The classical complement pathway is initiated by the C1Q subcomplex of the C1 complex, which specifically binds IgG or IgM immunoglobulins complexed with antigens, forming antigen-antibody complexes on the surface of pathogens: C1QA, together with C1QB and C1QC, specifically recognizes and binds the Fc regions of IgG or IgM via its C1q domain. Immunoglobulin-binding activates the proenzyme C1R, which cleaves C1S, initiating the proteolytic cascade of the complement system. The C1Q subcomplex is activated by a hexamer of IgG complexed with antigens, while it is activated by a pentameric IgM. The C1Q subcomplex also recognizes and binds phosphatidylserine exposed on the surface of cells undergoing programmed cell death, possibly promoting activation of the complement system. This Homo sapiens (Human) protein is Complement C1q subcomponent subunit C.